Here is a 305-residue protein sequence, read N- to C-terminus: Tyrosine recombinase XerC (305 aa).

The 93-residue stretch at 1–93 (MVLDGFAAHF…SWRQYCVWLV (93 aa)) folds into the Core-binding (CB) domain. One can recognise a Tyr recombinase domain in the interval 114-294 (RVPKALPQEW…DFDHIARLYD (181 aa)). Catalysis depends on residues R155, K179, H246, R249, and H272. Y281 (O-(3'-phospho-DNA)-tyrosine intermediate) is an active-site residue.

The protein belongs to the 'phage' integrase family. XerC subfamily. As to quaternary structure, forms a cyclic heterotetrameric complex composed of two molecules of XerC and two molecules of XerD.

The protein localises to the cytoplasm. In terms of biological role, site-specific tyrosine recombinase, which acts by catalyzing the cutting and rejoining of the recombining DNA molecules. The XerC-XerD complex is essential to convert dimers of the bacterial chromosome into monomers to permit their segregation at cell division. It also contributes to the segregational stability of plasmids. This chain is Tyrosine recombinase XerC, found in Neisseria meningitidis serogroup C (strain 053442).